The chain runs to 160 residues: MGGFRAVIYYLLAAAVIALDQWTKWLVVRYMQLGESIPMIDNVLYITSHRNRGAAWGMLQGQFWLFYLVTVIVVAGIIIYIRRLRPSERLAGIGLGLMLGGAIGNFIDRVFRKEVVDFIHTYIGTYSFPVFNIADSALTVGVILLFIHMFFFATPEKGNE.

Transmembrane regions (helical) follow at residues 7–27, 61–81, and 91–111; these read VIYY…KWLV, GQFW…IIYI, and AGIG…DRVF. Active-site residues include aspartate 117 and aspartate 135. A helical transmembrane segment spans residues 133 to 153; it reads IADSALTVGVILLFIHMFFFA.

Belongs to the peptidase A8 family.

Its subcellular location is the cell membrane. It catalyses the reaction Release of signal peptides from bacterial membrane prolipoproteins. Hydrolyzes -Xaa-Yaa-Zaa-|-(S,diacylglyceryl)Cys-, in which Xaa is hydrophobic (preferably Leu), and Yaa (Ala or Ser) and Zaa (Gly or Ala) have small, neutral side chains.. Its pathway is protein modification; lipoprotein biosynthesis (signal peptide cleavage). In terms of biological role, this protein specifically catalyzes the removal of signal peptides from prolipoproteins. The protein is Lipoprotein signal peptidase of Geobacillus thermodenitrificans (strain NG80-2).